A 271-amino-acid chain; its full sequence is Type III pantothenate kinase (271 aa).

An ATP-binding site is contributed by 6–13 (DVRNTHTV). 109–112 (GADR) contributes to the substrate binding site. The Proton acceptor role is filled by Asp111. Asp131 is a binding site for K(+). Position 134 (Ser134) interacts with ATP. Thr186 contributes to the substrate binding site.

It belongs to the type III pantothenate kinase family. Homodimer. It depends on NH4(+) as a cofactor. K(+) serves as cofactor.

The protein resides in the cytoplasm. The catalysed reaction is (R)-pantothenate + ATP = (R)-4'-phosphopantothenate + ADP + H(+). Its pathway is cofactor biosynthesis; coenzyme A biosynthesis; CoA from (R)-pantothenate: step 1/5. Its function is as follows. Catalyzes the phosphorylation of pantothenate (Pan), the first step in CoA biosynthesis. This is Type III pantothenate kinase from Mycolicibacterium smegmatis (strain ATCC 700084 / mc(2)155) (Mycobacterium smegmatis).